We begin with the raw amino-acid sequence, 169 residues long: Cuticle protein 21 (169 aa).

Tandem repeats lie at residues 21–24 (AAPV), 27–30 (AAPA), 33–36 (AAPV), 39–42 (AAPA), 47–50 (AAPV), and 53–56 (AAPA). Residues 65-135 (NPQYSYAYNV…KEAGAHPAPV (71 aa)) form the Chitin-binding type R&amp;R domain. 3 tandem repeats follow at residues 140–143 (AAPV), 146–149 (AAPA), and 160–163 (AAPA).

Its function is as follows. Component of the cuticle of migratory locust which contains more than 100 different structural proteins. This Locusta migratoria (Migratory locust) protein is Cuticle protein 21 (ACP21).